Reading from the N-terminus, the 226-residue chain is Uridylate kinase (226 aa).

Residue 6-10 (KISGK) coordinates ATP. G43 provides a ligand contact to UMP. The ATP site is built by G44 and R48. UMP is bound by residues D65 and 113–119 (FQPGQST). Residues T139, N140, Y145, and D148 each coordinate ATP.

The protein belongs to the UMP kinase family. Homohexamer.

It is found in the cytoplasm. The enzyme catalyses UMP + ATP = UDP + ADP. Its pathway is pyrimidine metabolism; CTP biosynthesis via de novo pathway; UDP from UMP (UMPK route): step 1/1. Inhibited by UTP. In terms of biological role, catalyzes the reversible phosphorylation of UMP to UDP. In Saccharolobus islandicus (strain M.16.27) (Sulfolobus islandicus), this protein is Uridylate kinase.